The primary structure comprises 31 residues: Protamine-YI (31 aa).

Residues 1–31 (ARRRRSSSRPIRRRRPRRRTTRRRRAGRRRR) form a disordered region.

Testis.

It localises to the nucleus. Its subcellular location is the chromosome. Functionally, protamines substitute for histones in the chromatin of sperm during the haploid phase of spermatogenesis. They compact sperm DNA into a highly condensed, stable and inactive complex. This Clupea harengus (Atlantic herring) protein is Protamine-YI.